We begin with the raw amino-acid sequence, 279 residues long: Large ribosomal subunit protein uL2 (279 aa).

The segment at 202–279 (NASIGKAGRS…TSRHKSKKKG (78 aa)) is disordered. The span at 209-220 (GRSRWLGRRPHN) shows a compositional bias: basic residues.

The protein belongs to the universal ribosomal protein uL2 family. Part of the 50S ribosomal subunit. Forms a bridge to the 30S subunit in the 70S ribosome.

Its function is as follows. One of the primary rRNA binding proteins. Required for association of the 30S and 50S subunits to form the 70S ribosome, for tRNA binding and peptide bond formation. It has been suggested to have peptidyltransferase activity; this is somewhat controversial. Makes several contacts with the 16S rRNA in the 70S ribosome. In Methylocella silvestris (strain DSM 15510 / CIP 108128 / LMG 27833 / NCIMB 13906 / BL2), this protein is Large ribosomal subunit protein uL2.